We begin with the raw amino-acid sequence, 122 residues long: Large ribosomal subunit protein uL14 (122 aa).

The protein belongs to the universal ribosomal protein uL14 family. Part of the 50S ribosomal subunit. Forms a cluster with proteins L3 and L19. In the 70S ribosome, L14 and L19 interact and together make contacts with the 16S rRNA in bridges B5 and B8.

Binds to 23S rRNA. Forms part of two intersubunit bridges in the 70S ribosome. The chain is Large ribosomal subunit protein uL14 from Cutibacterium acnes (strain DSM 16379 / KPA171202) (Propionibacterium acnes).